A 503-amino-acid chain; its full sequence is Probable cytosol aminopeptidase (503 aa).

Residues Lys-270 and Asp-275 each coordinate Mn(2+). Lys-282 is an active-site residue. 3 residues coordinate Mn(2+): Asp-293, Asp-352, and Glu-354. Arg-356 is an active-site residue.

The protein belongs to the peptidase M17 family. The cofactor is Mn(2+).

Its subcellular location is the cytoplasm. It catalyses the reaction Release of an N-terminal amino acid, Xaa-|-Yaa-, in which Xaa is preferably Leu, but may be other amino acids including Pro although not Arg or Lys, and Yaa may be Pro. Amino acid amides and methyl esters are also readily hydrolyzed, but rates on arylamides are exceedingly low.. The catalysed reaction is Release of an N-terminal amino acid, preferentially leucine, but not glutamic or aspartic acids.. In terms of biological role, presumably involved in the processing and regular turnover of intracellular proteins. Catalyzes the removal of unsubstituted N-terminal amino acids from various peptides. The chain is Probable cytosol aminopeptidase from Shigella boydii serotype 18 (strain CDC 3083-94 / BS512).